Consider the following 337-residue polypeptide: Phosphate acyltransferase (337 aa).

The protein belongs to the PlsX family. Homodimer. Probably interacts with PlsY.

It is found in the cytoplasm. It carries out the reaction a fatty acyl-[ACP] + phosphate = an acyl phosphate + holo-[ACP]. The protein operates within lipid metabolism; phospholipid metabolism. Its function is as follows. Catalyzes the reversible formation of acyl-phosphate (acyl-PO(4)) from acyl-[acyl-carrier-protein] (acyl-ACP). This enzyme utilizes acyl-ACP as fatty acyl donor, but not acyl-CoA. In Listeria monocytogenes serotype 4b (strain F2365), this protein is Phosphate acyltransferase.